Consider the following 334-residue polypeptide: Spermatogenesis-associated protein 32 (334 aa).

A disordered region spans residues 24–98 (SDHHRHHHHH…TESPEQQNYR (75 aa)). The span at 37–47 (ENEDEDTEVEA) shows a compositional bias: acidic residues. Residues 48 to 60 (ELPRTEPPPKVDP) show a composition bias toward basic and acidic residues. The segment covering 77-98 (SKTTPETEGDSYTESPEQQNYR) has biased composition (polar residues). Residues S135 and S138 each carry the phosphoserine modification.

In terms of assembly, interacts with syntaxin-1 and ACTB. As to expression, highly expressed in the testis and weakly in the brain and heart.

In Mus musculus (Mouse), this protein is Spermatogenesis-associated protein 32 (Spata32).